The following is a 218-amino-acid chain: Thiopurine S-methyltransferase (218 aa).

S-adenosyl-L-methionine-binding residues include Trp-10, Leu-45, Glu-66, and Arg-123.

Belongs to the class I-like SAM-binding methyltransferase superfamily. TPMT family.

The protein resides in the cytoplasm. The enzyme catalyses S-adenosyl-L-methionine + a thiopurine = S-adenosyl-L-homocysteine + a thiopurine S-methylether.. This Shewanella sp. (strain MR-4) protein is Thiopurine S-methyltransferase.